A 395-amino-acid polypeptide reads, in one-letter code: NAD(P)H-quinone oxidoreductase subunit H, chloroplastic (395 aa).

Belongs to the complex I 49 kDa subunit family. In terms of assembly, NDH is composed of at least 16 different subunits, 5 of which are encoded in the nucleus.

The protein localises to the plastid. The protein resides in the chloroplast thylakoid membrane. It catalyses the reaction a plastoquinone + NADH + (n+1) H(+)(in) = a plastoquinol + NAD(+) + n H(+)(out). The catalysed reaction is a plastoquinone + NADPH + (n+1) H(+)(in) = a plastoquinol + NADP(+) + n H(+)(out). NDH shuttles electrons from NAD(P)H:plastoquinone, via FMN and iron-sulfur (Fe-S) centers, to quinones in the photosynthetic chain and possibly in a chloroplast respiratory chain. The immediate electron acceptor for the enzyme in this species is believed to be plastoquinone. Couples the redox reaction to proton translocation, and thus conserves the redox energy in a proton gradient. The protein is NAD(P)H-quinone oxidoreductase subunit H, chloroplastic of Citrus sinensis (Sweet orange).